An 846-amino-acid chain; its full sequence is Iron-sulfur cluster assembly SufBD family protein Mb1496 (846 aa).

The interval 1–20 (MTLTPEASKSVAQPPTQAPL) is disordered. In terms of domain architecture, DOD-type homing endonuclease spans 388-528 (LAGYYLAEGH…LQSILARLGH (141 aa)).

Belongs to the iron-sulfur cluster assembly SufBD family. This protein undergoes a protein self splicing that involves a post-translational excision of the intervening region (intein) followed by peptide ligation.

This is Iron-sulfur cluster assembly SufBD family protein Mb1496 from Mycobacterium bovis (strain ATCC BAA-935 / AF2122/97).